Here is a 146-residue protein sequence, read N- to C-terminus: Snaclec jerdonibitin subunit beta (146 aa).

Residues 1–23 (MGRFIFVSFGLLVVFLSLSGTGA) form the signal peptide. 3 disulfide bridges follow: cysteine 25-cysteine 36, cysteine 53-cysteine 142, and cysteine 119-cysteine 134. The region spanning 32–143 (YEGHCYRVFQ…CSKTYPFVCK (112 aa)) is the C-type lectin domain.

Belongs to the snaclec family. Heterodimer of subunits alpha and beta; disulfide-linked. In terms of tissue distribution, expressed by the venom gland.

It localises to the secreted. Snaclec that dose-dependently inhibits platelet aggregation induced by ristocetin or low-dose thrombin, but not by high-dose thrombin. Binds to GPIbalpha (GP1BA). In vivo, also dose-dependently induces thrombocytopenia of mice and platelet counts remains at very low level even after 18 hours intravenous injection. The polypeptide is Snaclec jerdonibitin subunit beta (Protobothrops jerdonii (Jerdon's pitviper)).